Here is a 377-residue protein sequence, read N- to C-terminus: Pseudouridylate synthase RPUSD4, mitochondrial (377 aa).

Residues 1 to 46 constitute a mitochondrion transit peptide; it reads MAAPCLRTPGVQLLSMSSRPGRLFTPGSWSFCSSATSSRPLNAQRL. Aspartate 153 is an active-site residue.

The protein belongs to the pseudouridine synthase RluA family. Interacts with 16S mt-rRNA, mt-tRNA(Phe) and mt-tRNA(Met). Forms a regulatory protein-RNA complex, consisting of RCC1L, NGRN, RPUSD3, RPUSD4, TRUB2, FASTKD2 and 16S mt-rRNA.

The protein localises to the mitochondrion matrix. It is found in the nucleus. Its subcellular location is the cytoplasm. The catalysed reaction is uridine in 5S rRNA = pseudouridine in 5S rRNA. It carries out the reaction a uridine in tRNA = a pseudouridine in tRNA. It catalyses the reaction a uridine in mRNA = a pseudouridine in mRNA. In terms of biological role, catalyzes uridine to pseudouridine isomerization (pseudouridylation) of different mitochondrial RNA substrates. Acts on position 1397 in 16S mitochondrial ribosomal RNA (16S mt-rRNA). This modification is required for the assembly of 16S mt-rRNA into a functional mitochondrial ribosome. As a component of a functional protein-RNA module, consisting of RCC1L, NGRN, RPUSD3, RPUSD4, TRUB2, FASTKD2 and 16S mt-rRNA, controls 16S mt-rRNA abundance and is required for intra-mitochondrial translation. Acts on position 39 in mitochondrial tRNA(Phe). Also catalyzes pseudouridylation of mRNAs in nucleus: acts as a regulator of pre-mRNA splicing by mediating pseudouridylation of pre-mRNAs at locations associated with alternatively spliced regions. Pseudouridylation of pre-mRNAs near splice sites directly regulates mRNA splicing and mRNA 3'-end processing. This chain is Pseudouridylate synthase RPUSD4, mitochondrial, found in Mus musculus (Mouse).